The sequence spans 427 residues: Serine--tRNA ligase (427 aa).

231-233 (TAE) lines the L-serine pocket. 262 to 264 (RSE) contacts ATP. Position 285 (glutamate 285) interacts with L-serine. Position 349-352 (349-352 (EISS)) interacts with ATP. Serine 385 contacts L-serine.

The protein belongs to the class-II aminoacyl-tRNA synthetase family. Type-1 seryl-tRNA synthetase subfamily. In terms of assembly, homodimer. The tRNA molecule binds across the dimer.

It localises to the cytoplasm. The catalysed reaction is tRNA(Ser) + L-serine + ATP = L-seryl-tRNA(Ser) + AMP + diphosphate + H(+). It catalyses the reaction tRNA(Sec) + L-serine + ATP = L-seryl-tRNA(Sec) + AMP + diphosphate + H(+). It participates in aminoacyl-tRNA biosynthesis; selenocysteinyl-tRNA(Sec) biosynthesis; L-seryl-tRNA(Sec) from L-serine and tRNA(Sec): step 1/1. Its function is as follows. Catalyzes the attachment of serine to tRNA(Ser). Is also able to aminoacylate tRNA(Sec) with serine, to form the misacylated tRNA L-seryl-tRNA(Sec), which will be further converted into selenocysteinyl-tRNA(Sec). The chain is Serine--tRNA ligase from Rhizobium johnstonii (strain DSM 114642 / LMG 32736 / 3841) (Rhizobium leguminosarum bv. viciae).